Consider the following 527-residue polypeptide: Bifunctional purine biosynthesis protein PurH (527 aa).

In terms of domain architecture, MGS-like spans 1-149; that stretch reads MASDFLPVRR…KNFARVAVAT (149 aa).

It belongs to the PurH family.

It catalyses the reaction (6R)-10-formyltetrahydrofolate + 5-amino-1-(5-phospho-beta-D-ribosyl)imidazole-4-carboxamide = 5-formamido-1-(5-phospho-D-ribosyl)imidazole-4-carboxamide + (6S)-5,6,7,8-tetrahydrofolate. The catalysed reaction is IMP + H2O = 5-formamido-1-(5-phospho-D-ribosyl)imidazole-4-carboxamide. It participates in purine metabolism; IMP biosynthesis via de novo pathway; 5-formamido-1-(5-phospho-D-ribosyl)imidazole-4-carboxamide from 5-amino-1-(5-phospho-D-ribosyl)imidazole-4-carboxamide (10-formyl THF route): step 1/1. It functions in the pathway purine metabolism; IMP biosynthesis via de novo pathway; IMP from 5-formamido-1-(5-phospho-D-ribosyl)imidazole-4-carboxamide: step 1/1. The chain is Bifunctional purine biosynthesis protein PurH from Xanthomonas campestris pv. campestris (strain 8004).